A 664-amino-acid chain; its full sequence is Type IV inositol polyphosphate 5-phosphatase 3 (664 aa).

Positions 35–76 (GRDPEYGADTDNESENEDAREDNDDSSSDEEGGSGSRGRESK) are disordered. A compositionally biased stretch (acidic residues) spans 40 to 66 (YGADTDNESENEDAREDNDDSSSDEEG). 2 catalytic regions span residues 514–529 (ERII…LSSS) and 592–607 (PKRT…SYGK).

Belongs to the inositol polyphosphate 5-phosphatase family.

The enzyme catalyses a 1,2-diacyl-sn-glycero-3-phospho-(1D-myo-inositol-4,5-bisphosphate) + H2O = a 1,2-diacyl-sn-glycero-3-phospho-(1D-myo-inositol 4-phosphate) + phosphate. It carries out the reaction a 1,2-diacyl-sn-glycero-3-phospho-(1D-myo-inositol-3,4,5-trisphosphate) + H2O = a 1,2-diacyl-sn-glycero-3-phospho-(1D-myo-inositol-3,4-bisphosphate) + phosphate. Functionally, has phosphatase activity toward PtdIns(4,5)P2 and PtdIns(3,4,5)P3. The polypeptide is Type IV inositol polyphosphate 5-phosphatase 3 (Arabidopsis thaliana (Mouse-ear cress)).